Reading from the N-terminus, the 432-residue chain is Glutamyl-tRNA reductase (432 aa).

Substrate-binding positions include 55–58 (TCNR), S114, 119–121 (ETQ), and Q125. C56 functions as the Nucleophile in the catalytic mechanism. 194–199 (GAGEMI) contributes to the NADP(+) binding site.

This sequence belongs to the glutamyl-tRNA reductase family. As to quaternary structure, homodimer.

The catalysed reaction is (S)-4-amino-5-oxopentanoate + tRNA(Glu) + NADP(+) = L-glutamyl-tRNA(Glu) + NADPH + H(+). Its pathway is porphyrin-containing compound metabolism; protoporphyrin-IX biosynthesis; 5-aminolevulinate from L-glutamyl-tRNA(Glu): step 1/2. Functionally, catalyzes the NADPH-dependent reduction of glutamyl-tRNA(Glu) to glutamate 1-semialdehyde (GSA). The chain is Glutamyl-tRNA reductase from Burkholderia multivorans (strain ATCC 17616 / 249).